Here is a 126-residue protein sequence, read N- to C-terminus: Fluoride-specific ion channel FluC (126 aa).

4 consecutive transmembrane segments (helical) span residues 1 to 21 (MTATAFVAIGGGIGAVLRFHA), 33 to 53 (AVFPWGTFAINVVGSLLMGVL), 72 to 92 (VGVLGGFTTFSAFSLETALLV), and 97 to 117 (IGLAALYAAGSVVAGVTGLFL). Na(+) is bound by residues Gly-76 and Thr-79.

Belongs to the fluoride channel Fluc/FEX (TC 1.A.43) family.

The protein resides in the cell inner membrane. It catalyses the reaction fluoride(in) = fluoride(out). With respect to regulation, na(+) is not transported, but it plays an essential structural role and its presence is essential for fluoride channel function. Its function is as follows. Fluoride-specific ion channel. Important for reducing fluoride concentration in the cell, thus reducing its toxicity. The sequence is that of Fluoride-specific ion channel FluC from Novosphingobium aromaticivorans (strain ATCC 700278 / DSM 12444 / CCUG 56034 / CIP 105152 / NBRC 16084 / F199).